We begin with the raw amino-acid sequence, 186 residues long: UPF0200 protein Mbar_A0975 (186 aa).

8–15 (GMPASGKS) lines the ATP pocket.

This sequence belongs to the UPF0200 family.

This chain is UPF0200 protein Mbar_A0975, found in Methanosarcina barkeri (strain Fusaro / DSM 804).